The following is a 991-amino-acid chain: Translation initiation factor IF-2 (991 aa).

Disordered stretches follow at residues 53-85 (SHGT…KART), 97-175 (VKRD…EAAE), and 312-395 (GIKG…DRGG). 2 stretches are compositionally biased toward basic and acidic residues: residues 97–113 (VKRD…HDSQ) and 125–175 (ELQR…EAAE). Positions 323 to 338 (AAGAPAPGAAPGAAAK) are enriched in low complexity. Residues 339 to 349 (PGEKKSVKSEK) are compositionally biased toward basic and acidic residues. A tr-type G domain is found at 491–658 (PRPPVVTVMG…QVLLQAEVLE (168 aa)). Positions 500–507 (GHVDHGKT) are G1. 500 to 507 (GHVDHGKT) provides a ligand contact to GTP. The tract at residues 525–529 (GITQH) is G2. A G3 region spans residues 546 to 549 (DTPG). Residues 546-550 (DTPGH) and 600-603 (NKID) each bind GTP. Residues 600-603 (NKID) form a G4 region. A G5 region spans residues 636 to 638 (SAK).

It belongs to the TRAFAC class translation factor GTPase superfamily. Classic translation factor GTPase family. IF-2 subfamily.

Its subcellular location is the cytoplasm. In terms of biological role, one of the essential components for the initiation of protein synthesis. Protects formylmethionyl-tRNA from spontaneous hydrolysis and promotes its binding to the 30S ribosomal subunits. Also involved in the hydrolysis of GTP during the formation of the 70S ribosomal complex. The protein is Translation initiation factor IF-2 of Leptothrix cholodnii (strain ATCC 51168 / LMG 8142 / SP-6) (Leptothrix discophora (strain SP-6)).